Reading from the N-terminus, the 307-residue chain is Farnesol kinase, chloroplastic (307 aa).

Residues 1–65 (MATTSTTTKL…TKIRKSSLAA (65 aa)) constitute a chloroplast transit peptide. 7 helical membrane passes run 77 to 97 (VCAFGVTSIVAFSCLGFWGEI), 116 to 136 (IGLVFMLCWPLFSSGIQGALF), 137 to 157 (ASLVPGLNIVRMLLLGLGVYH), 177 to 194 (GPLYYVLSITSACIYYWK), 197 to 217 (PIAIAVICNLCAGDGMADIVG), 237 to 257 (IGMATAGFLASVAYMYYFASF), and 265 to 285 (GMILRFLVISIASALVESLPI).

Belongs to the polyprenol kinase family.

It is found in the plastid. It localises to the chloroplast membrane. The catalysed reaction is (2E,6E)-farnesol + CTP = (2E,6E)-farnesyl phosphate + CDP + H(+). It catalyses the reaction (2E,6E)-farnesol + ATP = (2E,6E)-farnesyl phosphate + ADP + H(+). The enzyme catalyses (2E)-geraniol + ATP = (2E)-geranyl phosphate + ADP + H(+). It carries out the reaction (2E,6E,10E)-geranylgeraniol + ATP = (2E,6E,10E)-geranylgeranyl phosphate + ADP + H(+). Its function is as follows. Kinase involved in negative regulation of abscisic acid (ABA) signaling. Substrate preference is farnesol &gt; geraniol &gt; geranylgeraniol, but has no activity with farnesyl phosphate. Can use CTP &gt; ATP &gt; GTP = UTP as phosphoryl donor. This chain is Farnesol kinase, chloroplastic, found in Arabidopsis thaliana (Mouse-ear cress).